Reading from the N-terminus, the 403-residue chain is Chalcone synthase 3 (403 aa).

C170 is an active-site residue.

This sequence belongs to the thiolase-like superfamily. Chalcone/stilbene synthases family.

The enzyme catalyses (E)-4-coumaroyl-CoA + 3 malonyl-CoA + 3 H(+) = 2',4,4',6'-tetrahydroxychalcone + 3 CO2 + 4 CoA. It participates in secondary metabolite biosynthesis; flavonoid biosynthesis. The primary product of this enzyme is 4,2',4',6'-tetrahydroxychalcone (also termed naringenin-chalcone or chalcone) which can under specific conditions spontaneously isomerize into naringenin. This Gerbera hybrida (Daisy) protein is Chalcone synthase 3 (CHS3).